The following is a 367-amino-acid chain: tRNA-specific 2-thiouridylase MnmA (367 aa).

ATP contacts are provided by residues 11–18 and Met37; that span reads GLSGGVDS. The segment at 109–111 is interaction with target base in tRNA; the sequence is NPD. Cys114 serves as the catalytic Nucleophile. An intrachain disulfide couples Cys114 to Cys211. Residue Gly139 coordinates ATP. An interaction with tRNA region spans residues 161–163; the sequence is KDQ. Residue Cys211 is the Cysteine persulfide intermediate of the active site.

It belongs to the MnmA/TRMU family.

It localises to the cytoplasm. The enzyme catalyses S-sulfanyl-L-cysteinyl-[protein] + uridine(34) in tRNA + AH2 + ATP = 2-thiouridine(34) in tRNA + L-cysteinyl-[protein] + A + AMP + diphosphate + H(+). Catalyzes the 2-thiolation of uridine at the wobble position (U34) of tRNA, leading to the formation of s(2)U34. The polypeptide is tRNA-specific 2-thiouridylase MnmA (Mycoplasma genitalium (strain ATCC 33530 / DSM 19775 / NCTC 10195 / G37) (Mycoplasmoides genitalium)).